The primary structure comprises 520 residues: MATMAAIGSLKVPSSSSNHTRRLSSSSQRKTLSFSSSSLTGEKLNPTQEIIISNLPRGNERRTPSIVSPKAVSDSQNSQTCLDPDASRSVLGIILGGGAGTRLYPLTKKRAKPAVPLGANYRLIDIPVSNCLNSNISKIYVLTQFNSASLNRHLSRAYASNMGGYKNEGFVEVLAAQQSPENPNWFQGTADAVRQYLWLFEEHNVLEFLVLAGDHLYRMDYEKFIQAHRETDADITVAALPMDEKRATAFGLMKIDDEGRIIEFAEKPKGEQLKAMKVDTTILGLDDERAKEMPFIASMGIYVVSKNVMLDLLRDQFPGANDFGSEVIPGATDLGLRVQAYLYDGYWEDIGTIEAFYNANLGITKKPVPDFSFYDRSAPIYTQPRYLPPSKMLDADVTDSVIGEGCVIKNCKIHHSVIGLRSCISEGAIIEDTLLMGADYYETDADRTLLAAKGSIPIGIGRDSHIKRAIIDKNARIGDNVKIINTDNVQEAARETDGYFIKSGIVTVIKDALIPSGTVI.

The transit peptide at 1-71 (MATMAAIGSL…RTPSIVSPKA (71 aa)) directs the protein to the chloroplast. The interval 1 to 81 (MATMAAIGSL…VSDSQNSQTC (81 aa)) is disordered. Positions 14–27 (SSSSNHTRRLSSSS) are enriched in low complexity. Polar residues predominate over residues 28-51 (QRKTLSFSSSSLTGEKLNPTQEII).

This sequence belongs to the bacterial/plant glucose-1-phosphate adenylyltransferase family. In terms of assembly, heterotetramer. As to expression, leaves.

The protein resides in the plastid. It localises to the chloroplast. It catalyses the reaction alpha-D-glucose 1-phosphate + ATP + H(+) = ADP-alpha-D-glucose + diphosphate. The protein operates within glycan biosynthesis; starch biosynthesis. Activated by 3'phosphoglycerate, inhibited by orthophosphate. Allosteric regulation. Functionally, this protein plays a role in synthesis of starch. It catalyzes the synthesis of the activated glycosyl donor, ADP-glucose from Glc-1-P and ATP. The chain is Glucose-1-phosphate adenylyltransferase small subunit, chloroplastic (AGPS1) from Brassica napus (Rape).